Consider the following 642-residue polypeptide: Serotransferrin (642 aa).

2 Transferrin-like domains span residues 1–280 (GIKE…SLKK) and 290–621 (IKWC…SLRQ). Fe(3+)-binding residues include Asp25 and Tyr54. 3 disulfide bridges follow: Cys77-Cys158, Cys121-Cys137, and Cys186-Cys200. Thr79, Lys83, Ala85, and Gly86 together coordinate hydrogencarbonate. Tyr152 contributes to the Fe(3+) binding site. Residue His208 coordinates Fe(3+). Disulfide bonds link Cys293/Cys329 and Cys303/Cys320. Asp344 provides a ligand contact to Fe(3+). 7 disulfides stabilise this stretch: Cys354/Cys633, Cys369/Cys594, Cys402/Cys480, Cys426/Cys622, Cys436/Cys450, Cys447/Cys463, and Cys520/Cys535. N-linked (GlcNAc...) asparagine glycosylation occurs at Asn365. Tyr379 contributes to the Fe(3+) binding site. Residues Thr404, Arg408, Ala410, and Gly411 each coordinate hydrogencarbonate. A Fe(3+)-binding site is contributed by Tyr474. Residue His543 participates in Fe(3+) binding.

Belongs to the transferrin family. In terms of assembly, monomer. Brain and liver; to a lesser extent in kidney and heart.

The protein localises to the secreted. In terms of biological role, transferrins are iron binding transport proteins which can bind two Fe(3+) ions in association with the binding of an anion, usually bicarbonate. The polypeptide is Serotransferrin (tf) (Gadus morhua (Atlantic cod)).